The following is a 622-amino-acid chain: Palmitoyltransferase ZDHHC13 (622 aa).

M1 carries the post-translational modification N-acetylmethionine. The Cytoplasmic segment spans residues 1-291; sequence MEGPGLGSQC…RLWRWLQKCE (291 aa). ANK repeat units follow at residues 43–78, 81–110, 115–144, 148–177, 181–211, 216–245, and 249–277; these read PLIEDSSNCDIVKATQYGIFERCKELVEAGYDVRQP, ENVSLLHWAAINNRLDLVKFYISKGAVVDQ, LNSTPLHWAIRQGHLPMVILLLQHGADPTL, EGFSSIHLAVLFQHMPIIAYLISKGQSVNM, NGQTPLMLSAHKVIGPEPTGFLLKFNPSLNV, HQNTPLHWAVAAGNVNAVDKLLEAGSSLDI, and KGETPLDMALQNKNQLIIHMLKTEAKMRA. A helical membrane pass occupies residues 292–312; the sequence is LFLLLMLSVITMWAVGYILDF. At 313–320 the chain is on the lumenal side; it reads NSDSWLLK. The helical transmembrane segment at 321-341 threads the bilayer; the sequence is GCLLVTLFFLTSLFPRFLVGY. The Cytoplasmic portion of the chain corresponds to 342-347; sequence KNLVYL. Residues 348 to 368 form a helical membrane-spanning segment; sequence PTAFLLSSVFWIFMTWFILFF. The Lumenal portion of the chain corresponds to 369–370; the sequence is PD. The helical transmembrane segment at 371–391 threads the bilayer; that stretch reads LAGAPFYFSFIFSIVAFLYFF. Residues 392–470 are Cytoplasmic-facing; that stretch reads YKTWATDPGF…RCIGFGNHHY (79 aa). Residues 426-476 form the DHHC domain; sequence TFCTSCLIRKPLRSLHCHVCNSCVARYDQHCLWTGRCIGFGNHHYYIFFLF. C456 functions as the S-palmitoyl cysteine intermediate in the catalytic mechanism. Residues 471–491 form a helical membrane-spanning segment; it reads YIFFLFFLSMVCGWIIYGSFI. Residues 492–518 lie on the Lumenal side of the membrane; that stretch reads YWSSHCATTFKEDGLWTYLNQIVACSP. A helical transmembrane segment spans residues 519–539; that stretch reads WVLYILMLATFHFSWSTFLLL. The Cytoplasmic segment spans residues 540–622; it reads NQLFQIAFLG…PAREKVLRSV (83 aa).

This sequence belongs to the DHHC palmitoyltransferase family. AKR/ZDHHC17 subfamily. In terms of assembly, interacts (via ANK repeats) with CLIP3. Interacts (via ANK repeats) with DNAJC5 (via C-terminus). Interacts (via ANK repeats) with HTT. Interacts (via ANK repeats) with MAP6. Interacts (via ANK repeats) with SNAP23. Interacts (via ANK repeats) with SNAP25. May interact (via ANK repeats) with SPRED2.

It is found in the golgi apparatus membrane. It localises to the cytoplasmic vesicle membrane. It catalyses the reaction L-cysteinyl-[protein] + hexadecanoyl-CoA = S-hexadecanoyl-L-cysteinyl-[protein] + CoA. In terms of biological role, palmitoyltransferase that could catalyze the addition of palmitate onto various protein substrates. Palmitoyltransferase for HTT and GAD2. May play a role in Mg(2+) transport. This Pongo abelii (Sumatran orangutan) protein is Palmitoyltransferase ZDHHC13.